A 757-amino-acid chain; its full sequence is Serine/threonine-protein phosphatase 2A 56 kDa regulatory subunit delta isoform (757 aa).

The segment covering 1–11 (MMRGFKQRLIK) has biased composition (basic residues). Disordered regions lie at residues 1 to 172 (MMRG…EDHA) and 188 to 250 (ISNA…NPDT). Over residues 12 to 21 (KTTGSSSSSS) the composition is skewed to low complexity. The span at 23-34 (KKKDKEKEKEKS) shows a compositional bias: basic and acidic residues. 3 stretches are compositionally biased toward low complexity: residues 35 to 66 (STTS…GSKS), 86 to 119 (SSTS…STKK), and 128 to 147 (QSKQ…SSSS). Residues 160-172 (TKDDKSTSGEDHA) are compositionally biased toward basic and acidic residues. The span at 197-216 (SSDVENGNSNNNNMNINTSN) shows a compositional bias: low complexity. Over residues 217–228 (TQDANHASSQSI) the composition is skewed to polar residues. 2 positions are modified to phosphothreonine: Thr-242 and Thr-257. The interval 734–757 (SFNTASENNTLNEENENDCDSEIQ) is disordered. The span at 746–757 (EENENDCDSEIQ) shows a compositional bias: acidic residues.

It belongs to the phosphatase 2A regulatory subunit B family. PP2A consists of a common heterodimeric core enzyme, composed of a 36 kDa catalytic subunit (subunit C) and a 65 kDa constant regulatory subunit (PR65 or subunit A), that associates with a variety of regulatory subunits. Proteins that associate with the core dimer include three families of regulatory subunits B (the R2/B/PR55/B55, R3/B''/PR72/PR130/PR59 and R5/B'/B56 families), the 48 kDa variable regulatory subunit, viral proteins, and cell signaling molecules.

It is found in the cytoplasm. Its subcellular location is the nucleus. The B regulatory subunit might modulate substrate selectivity and catalytic activity, and might also direct the localization of the catalytic enzyme to a particular subcellular compartment. In terms of biological role, multicopy suppressor of ROX3 and HSP60. This is Serine/threonine-protein phosphatase 2A 56 kDa regulatory subunit delta isoform (RTS1) from Saccharomyces cerevisiae (strain ATCC 204508 / S288c) (Baker's yeast).